A 1165-amino-acid chain; its full sequence is Protein hsr-9 (1165 aa).

4 disordered regions span residues 1–26, 70–578, 608–713, and 874–913; these read MASS…PTTT, AEDE…TEME, KYSM…IPLK, and TRAR…EEEE. Residues 16–26 are compositionally biased toward low complexity; it reads TVTQTSLPTTT. Basic and acidic residues-rich tracts occupy residues 98–114, 123–140, and 149–162; these read KDAK…KSES, TFEK…KLDI, and DTEK…KVVG. Composition is skewed to acidic residues over residues 163–179, 211–230, and 280–289; these read DEDE…DEDE, EKEE…EVEV, and GESEANEENQ. Polar residues predominate over residues 306-317; that stretch reads ATVSSTPSSNTP. A compositionally biased stretch (basic and acidic residues) spans 397–408; the sequence is NTEHPTEEETPK. Positions 415-431 are enriched in low complexity; it reads SAASSSATSSAVPTPRS. The segment covering 446-461 has biased composition (basic and acidic residues); sequence LQEKETEDPTKTHDTN. Residues 533 to 543 show a composition bias toward acidic residues; sequence DPIEEADETIE. Low complexity predominate over residues 554 to 563; sequence AAKSAPSSSK. 2 stretches are compositionally biased toward basic and acidic residues: residues 662–671 and 694–708; these read KKEEEHHEND and SEAS…KKEP. The 106-residue stretch at 923–1028 folds into the BRCT domain; it reads IGKNIFTGKV…KCVDYTDYVL (106 aa).

Expressed in germ cells.

It localises to the nucleus. In terms of biological role, may have a role in DNA double-strand break repair following gamma-irradiation. This chain is Protein hsr-9, found in Caenorhabditis elegans.